Here is a 449-residue protein sequence, read N- to C-terminus: Phosphoglucosamine mutase (449 aa).

The active-site Phosphoserine intermediate is the serine 102. The Mg(2+) site is built by serine 102, aspartate 243, aspartate 245, and aspartate 247. Serine 102 is modified (phosphoserine).

The protein belongs to the phosphohexose mutase family. Requires Mg(2+) as cofactor. In terms of processing, activated by phosphorylation.

The catalysed reaction is alpha-D-glucosamine 1-phosphate = D-glucosamine 6-phosphate. In terms of biological role, catalyzes the conversion of glucosamine-6-phosphate to glucosamine-1-phosphate. The chain is Phosphoglucosamine mutase from Maricaulis maris (strain MCS10) (Caulobacter maris).